We begin with the raw amino-acid sequence, 263 residues long: Putative hydro-lyase Pden_0321 (263 aa).

The protein belongs to the D-glutamate cyclase family.

In Paracoccus denitrificans (strain Pd 1222), this protein is Putative hydro-lyase Pden_0321.